The primary structure comprises 978 residues: MLLAMEGKLFLCQYLIWVMLLLGQLHGCTSCIEKEREALLELKKYLMSRSRESGLDYVLPTWTNDTKSDCCQWDGIKCNRTSGRVIELSVGDMYFKESSPLNLSLLHPFEEVRSLNLSTEGYNEFNGFFDDVEGYRSLSGLRNLKIMDLSTNYFNYSTFPFLNAATSLTTLILTYNEMDGPFPIKGLKDLTNLELLDLRANKLNGSMQELIHLKKLKALDLSSNKFSSSMELQELQNLINLEVLGLAQNHVDGPIPIEVFCKLKNLRDLDLKGNHFVGQIPLCLGSLKKLRVLDLSSNQLSGDLPSSFSSLESLEYLSLSDNNFDGSFSLNPLTNLTNLKLFKLSSRSHTIQVKMESTWQPNFQLSVVVLRFCSLEKIPSFLLYQKKLRLVDLSSNNLSGNIPTWLLTNNPELEVLQLQNNSFTIFPIPTMVHNLQIFDFSANNIGKFPDKMDHALPNLVRLNGSNNGFQGYFPTSIGEMKNISFLDLSYNNFSGKLPRSFVTGCVSIMFLKLSHNKFSGRFLPRETNFPSLDVLRMDNNLFTGNIGGGLSNSTMLRILDMSNNGLSGAIPRWLFEFPYLDYVLISNNFLEGTIPPSLLGMPFLSFLDLSGNQFSGALPSHVDSELGIYMFLHNNNFTGPIPDTLLKSVQILDLRNNKLSGSIPQFDDTQSINILLLKGNNLTGSIPRELCDLSNVRLLDLSDNKLNGVIPSCLSNLSFGRLQEDAMALNIPPSFLQTSLEMELYKSTFLVDKIEVDRSTYQETEIKFAAKQRYDSYSGRSEFSEGILRLMYGMDLSNNELSGVIPTELGDLLKLRTLNLSHNSLLGSIPSSFSKLIDVESLDLSHNMLQGSIPQLLSSLTSLAVFDVSSNNLSGIIPQGRQFNTFEEESYLGNPLLCGPPTSRSCETNKSPEEADNGQEEEDDKAAIDMMVFYFSTASIYVTALIGVLVLMCFDCPWRRAWLRIVDAFIASAKHVLP.

Positions 1–27 (MLLAMEGKLFLCQYLIWVMLLLGQLHG) are cleaved as a signal peptide. Topologically, residues 28-930 (CTSCIEKERE…EEDDKAAIDM (903 aa)) are extracellular. N-linked (GlcNAc...) asparagine glycosylation is found at Asn-64, Asn-79, Asn-102, Asn-116, and Asn-155. LRR repeat units follow at residues 141 to 167 (LRNLKIMDLSTNYFNYSTFPFLNAATS), 169 to 189 (TTLILTYNEMDGPFPIKGLKD), 190 to 213 (LTNLELLDLRANKLNGSMQELIHL), 214 to 237 (KKLKALDLSSNKFSSSMELQELQN), 238 to 262 (LINLEVLGLAQNHVDGPIPIEVFCK), 264 to 287 (KNLRDLDLKGNHFVGQIPLCLGSL), 288 to 310 (KKLRVLDLSSNQLSGDLPSSFSS), 312 to 335 (ESLEYLSLSDNNFDGSFSLNPLTN), 337 to 361 (TNLKLFKLSSRSHTIQVKMESTWQP), 362 to 385 (NFQLSVVVLRFCSLEKIPSFLLYQ), 386 to 409 (KKLRLVDLSSNNLSGNIPTWLLTN), 410 to 432 (NPELEVLQLQNNSFTIFPIPTMV), 433 to 455 (HNLQIFDFSANNIGKFPDKMDHA), 457 to 480 (PNLVRLNGSNNGFQGYFPTSIGEM), 481 to 504 (KNISFLDLSYNNFSGKLPRSFVTG), 506 to 529 (VSIMFLKLSHNKFSGRFLPRETNF), 530 to 553 (PSLDVLRMDNNLFTGNIGGGLSNS), 554 to 577 (TMLRILDMSNNGLSGAIPRWLFEF), 579 to 601 (YLDYVLISNNFLEGTIPPSLLGM), 602 to 625 (PFLSFLDLSGNQFSGALPSHVDSE), 627 to 646 (GIYMFLHNNNFTGPIPDTLL), 647 to 671 (KSVQILDLRNNKLSGSIPQFDDTQS), 673 to 693 (NILLLKGNNLTGSIPRELCDL), 694 to 716 (SNVRLLDLSDNKLNGVIPSCLSN), 788 to 811 (LRLMYGMDLSNNELSGVIPTELGD), 812 to 835 (LLKLRTLNLSHNSLLGSIPSSFSK), 837 to 859 (IDVESLDLSHNMLQGSIPQLLSS), and 860 to 885 (LTSLAVFDVSSNNLSGIIPQGRQFNT). N-linked (GlcNAc...) asparagine glycosylation is present at Asn-204. Asn-335 carries N-linked (GlcNAc...) asparagine glycosylation. N-linked (GlcNAc...) asparagine glycans are attached at residues Asn-397 and Asn-420. Asn-463, Asn-482, and Asn-492 each carry an N-linked (GlcNAc...) asparagine glycan. Residue Asn-552 is glycosylated (N-linked (GlcNAc...) asparagine). Asn-636 is a glycosylation site (N-linked (GlcNAc...) asparagine). Asn-681 and Asn-716 each carry an N-linked (GlcNAc...) asparagine glycan. Asn-819 carries N-linked (GlcNAc...) asparagine glycosylation. Asn-872 carries N-linked (GlcNAc...) asparagine glycosylation. Positions 902–922 (TSRSCETNKSPEEADNGQEEE) are disordered. A helical transmembrane segment spans residues 931–951 (MVFYFSTASIYVTALIGVLVL). The Cytoplasmic segment spans residues 952-978 (MCFDCPWRRAWLRIVDAFIASAKHVLP).

It belongs to the RLP family.

It is found in the cell membrane. The polypeptide is Receptor like protein 21 (Arabidopsis thaliana (Mouse-ear cress)).